Consider the following 648-residue polypeptide: Pumilio homolog 3 (648 aa).

Residues 1-124 are disordered; it reads MEVKGKKQFT…KKKKELKQSR (124 aa). Positions 17–27 are enriched in basic and acidic residues; sequence AQEKNRFHKNS. Lysine 33 is modified (N6-acetyllysine). Residues 60–69 are compositionally biased toward basic residues; it reads LGKKGVKQFK. The span at 94–124 shows a compositional bias: basic and acidic residues; sequence FQPDGRSDESAAKKPKWDDFKKKKKELKQSR. The short motif at 106–118 is the Nuclear localization signal element; it reads KKPKWDDFKKKKK. The PUM-HD domain maps to 143–510; it reads EILRRKDCDK…VVLDKSACVL (368 aa). 11 Pumilio repeats span residues 177–212, 213–248, 249–277, 289–325, 326–361, 362–397, 398–435, 436–504, 505–551, 552–596, and 597–636; these read HDST…LSKA, KYSR…MLRH, AEAS…ELYG, RTLD…VIKH, SLVH…LAHT, HDGA…VANG, QYSH…IVND, KYGR…VVLD, KSAC…IAEH, PAGH…WASV, and NRGA…KSTS. The tract at residues 289-297 is HA-8; that stretch reads RTLDKVLEV.

As to quaternary structure, interacts with PARP1 (via catalytic domain). As to expression, widely expressed.

It is found in the nucleus. The protein localises to the nucleolus. It localises to the nucleoplasm. Its subcellular location is the chromosome. Functionally, inhibits the poly(ADP-ribosyl)ation activity of PARP1 and the degradation of PARP1 by CASP3 following genotoxic stress. Binds to double-stranded RNA or DNA without sequence specificity. Involved in development of the eye and of primordial germ cells. This is Pumilio homolog 3 from Homo sapiens (Human).